Reading from the N-terminus, the 513-residue chain is MEEYEAQLLVVEQALENAADDAQRQELLALKNNLQELLALTRDTGDEAPTDELPQQGNDLDDELQRLKSELSALEAAGSSQTALDEERQLADLRTKYTAMVGEKCSAPHEHSWGTCYHNALICGVDDEVVINSEGVLDARLRVLFTNPTHREMLPCSYYLEGECRFDEAKCRFSHGALVTGSSIRKYNPPDFHKLSRSRPVFALLPDRLWHRGRVLCVNFVEQVCRVRLDGQDHKERERDFKFEELYPLTTDQDEDDELSSEESTSSMRDASSDEAESDMDDLEEARRARMVELSLFTYKPTDRLGAWEEFTRGIGSKLMEKMGYIHGTGLGSDGRGIVTPVSAQILPQGRSLDACMELREAANGDKDYFSVERKLKRAQRRQRKADEKAYVRESQRVDVFTFLNDRVLGPGESTQQSEQVAKKAKTNELQQHSTKTLNVETVRIADEIRRKQRDMAKVKQSLERNSGDAQLQKRLQVQMQSHKQELATLQAQERSLSKEQQTRKSKNKMFEF.

A C3H1-type zinc finger spans residues 155 to 178 (PCSYYLEGECRFDEAKCRFSHGAL). Acidic residues-rich tracts occupy residues 252-261 (DQDEDDELSS) and 273-283 (SDEAESDMDDL). The tract at residues 252-283 (DQDEDDELSSEESTSSMRDASSDEAESDMDDL) is disordered. In terms of domain architecture, G-patch spans 312–358 (TRGIGSKLMEKMGYIHGTGLGSDGRGIVTPVSAQILPQGRSLDACME). A compositionally biased stretch (polar residues) spans 477–495 (QVQMQSHKQELATLQAQER). The tract at residues 477–513 (QVQMQSHKQELATLQAQERSLSKEQQTRKSKNKMFEF) is disordered. The segment covering 496–513 (SLSKEQQTRKSKNKMFEF) has biased composition (basic and acidic residues).

It is found in the nucleus. Its function is as follows. Transcription repressor. This is Zinc finger CCCH-type with G patch domain-containing protein from Drosophila simulans (Fruit fly).